We begin with the raw amino-acid sequence, 161 residues long: Allophycocyanin alpha chain (161 aa).

An N4-methylasparagine modification is found at N71. C81 lines the (2R,3E)-phycocyanobilin pocket.

Belongs to the phycobiliprotein family. In terms of assembly, heterodimer of an alpha and a beta chain. Post-translationally, contains one covalently linked phycocyanobilin chromophore.

The protein localises to the cellular thylakoid membrane. Light-harvesting photosynthetic bile pigment-protein from the phycobiliprotein complex. Allophycocyanin has a maximum absorption at approximately 650 nanometers. This chain is Allophycocyanin alpha chain (apcA), found in Synechocystis sp. (strain PCC 6714) (Aphanocapsa sp. (strain PCC 6714)).